Consider the following 116-residue polypeptide: Protein Wnt-5a (116 aa).

The O-palmitoleoyl serine; by PORCN moiety is linked to residue S1. 2 N-linked (GlcNAc...) asparagine glycosylation sites follow: N69 and N83. C82 and C97 form a disulfide bridge.

Belongs to the Wnt family. Post-translationally, palmitoleoylation is required for efficient binding to frizzled receptors. Depalmitoleoylation leads to Wnt signaling pathway inhibition.

It is found in the secreted. The protein localises to the extracellular space. It localises to the extracellular matrix. Functionally, ligand for members of the frizzled family of seven transmembrane receptors. Can activate or inhibit canonical Wnt signaling, depending on receptor context. Required during embryogenesis for extension of the primary anterior-posterior axis. In Meleagris gallopavo (Wild turkey), this protein is Protein Wnt-5a (WNT5A).